A 450-amino-acid chain; its full sequence is 23S rRNA (uracil(1939)-C(5))-methyltransferase RlmD (450 aa).

Positions 1–62 constitute a TRAM domain; that stretch reads MPVAGPLEIV…PSYEQATLVD (62 aa). [4Fe-4S] cluster contacts are provided by cysteine 75, cysteine 81, cysteine 84, and cysteine 163. Residues glutamine 271, phenylalanine 300, asparagine 305, glutamate 321, asparagine 349, and aspartate 370 each coordinate S-adenosyl-L-methionine. Cysteine 406 acts as the Nucleophile in catalysis.

It belongs to the class I-like SAM-binding methyltransferase superfamily. RNA M5U methyltransferase family. RlmD subfamily.

The catalysed reaction is uridine(1939) in 23S rRNA + S-adenosyl-L-methionine = 5-methyluridine(1939) in 23S rRNA + S-adenosyl-L-homocysteine + H(+). Catalyzes the formation of 5-methyl-uridine at position 1939 (m5U1939) in 23S rRNA. This Ralstonia nicotianae (strain ATCC BAA-1114 / GMI1000) (Ralstonia solanacearum) protein is 23S rRNA (uracil(1939)-C(5))-methyltransferase RlmD.